We begin with the raw amino-acid sequence, 267 residues long: MLLAWVHTFLLSNMLLAEAYGSGGCFWDNGHLYREDQPSPAPGLRCLNWLAAQGSGESLAQPSPGNHNYCRNPDQDPRGPWCYISSETGVPEKRPCEDLRCPETTSQAPPPPPPSSTTELEEKFGVPGDKETQVFPPANALPARSEAAEVQPVIGISQRVRMNSKEKKDLGTLGYVLGVTMTVIIIAIGVGIVLGYTYKRGKDLKEQHEQKVCEREMQRITLPLSAFTNPTCEIMDEKTIIVHSNQTPADVQEGSTLLTDQAGTPGA.

The signal sequence occupies residues 1-21; sequence MLLAWVHTFLLSNMLLAEAYG. Over 22–172 the chain is Extracellular; sequence SGGCFWDNGH…NSKEKKDLGT (151 aa). The 78-residue stretch at 24 to 101 folds into the Kringle domain; sequence GCFWDNGHLY…EKRPCEDLRC (78 aa). Cystine bridges form between Cys-25–Cys-101, Cys-46–Cys-82, and Cys-70–Cys-96. Basic and acidic residues predominate over residues 91–101; the sequence is PEKRPCEDLRC. Residues 91-122 form a disordered region; that stretch reads PEKRPCEDLRCPETTSQAPPPPPPSSTTELEE. The chain crosses the membrane as a helical span at residues 173 to 193; the sequence is LGYVLGVTMTVIIIAIGVGIV. Residues 194-267 are Cytoplasmic-facing; it reads LGYTYKRGKD…LTDQAGTPGA (74 aa).

Its subcellular location is the cell membrane. Negative regulator of hepatic phosphatidylinositol 3-kinase (PI3K) activity. The sequence is that of Phosphoinositide-3-kinase-interacting protein 1 (Pik3ip1) from Rattus norvegicus (Rat).